The following is a 196-amino-acid chain: MSQMELIKKLREATGAGMMDVKRALEDAGWDEEKAVQLLRERGAMKAAKKADREAREGIIGHYIHHNQRVGVLVELNCETDFVARNELFQNLAKDLAMHIAMMNPRYVSAEEIPAEELEKERQIYIQAALNEGKPQQIAEKIAEGRLKKYLEEVVLLEQPFVKDDKVKVKELIQQAIAKIGENIVVRRFCRFELGA.

An involved in Mg(2+) ion dislocation from EF-Tu region spans residues 80–83 (TDFV).

It belongs to the EF-Ts family. In terms of assembly, heterotetramer composed of two EF-Ts.EF-Tu dimer complexes.

It localises to the cytoplasm. Associates with the EF-Tu.GDP complex and induces the exchange of GDP to GTP. It remains bound to the aminoacyl-tRNA.EF-Tu.GTP complex up to the GTP hydrolysis stage on the ribosome. This chain is Elongation factor Ts (tsf), found in Thermus thermophilus (strain ATCC 27634 / DSM 579 / HB8).